We begin with the raw amino-acid sequence, 185 residues long: Ribosome-recycling factor (185 aa).

Belongs to the RRF family.

It is found in the cytoplasm. Functionally, responsible for the release of ribosomes from messenger RNA at the termination of protein biosynthesis. May increase the efficiency of translation by recycling ribosomes from one round of translation to another. In Geobacter sp. (strain M21), this protein is Ribosome-recycling factor.